The following is a 392-amino-acid chain: Speckle-type POZ protein-like (392 aa).

The MATH domain maps to 31-161 (KFSYMWTINN…DDKLTLFCEV (131 aa)). The region spanning 200 to 267 (TDCCFFVRGK…VYTGKAPNLD (68 aa)) is the BTB domain.

This sequence belongs to the Tdpoz family. In terms of assembly, homodimer. Heterodimer with SPOP. Component of cullin-RING-based BCR (BTB-CUL3-RBX1) E3 ubiquitin-protein ligase complexes containing homodimeric SPOPL or the heterodimer formed by SPOP and SPOPL. Interacts with CUL3 and MACROH2A1.

Its subcellular location is the nucleus. It functions in the pathway protein modification; protein ubiquitination. Functionally, component of a cullin-RING-based BCR (BTB-CUL3-RBX1) E3 ubiquitin-protein ligase complex that mediates the ubiquitination and subsequent proteasomal degradation of target proteins, but with relatively low efficiency. Cullin-RING-based BCR (BTB-CUL3-RBX1) E3 ubiquitin-protein ligase complexes containing homodimeric SPOPL or the heterodimer formed by SPOP and SPOPL are less efficient than ubiquitin ligase complexes containing only SPOP. May function to down-regulate the activity of cullin-RING-based BCR (BTB-CUL3-RBX1) E3 ubiquitin-protein ligase complexes that contain SPOP. In Mus musculus (Mouse), this protein is Speckle-type POZ protein-like (Spopl).